The chain runs to 473 residues: GTPase Der (473 aa).

EngA-type G domains are found at residues Phe3–Arg167 and Leu203–Asn378. Residues Gly9–Ser16, Asp56–Leu60, Asn119–Glu122, Gly209–Ser216, Asp256–Met260, and Asn321–Asp324 contribute to the GTP site. The KH-like domain occupies Lys379 to Glu463.

It belongs to the TRAFAC class TrmE-Era-EngA-EngB-Septin-like GTPase superfamily. EngA (Der) GTPase family. As to quaternary structure, associates with the 50S ribosomal subunit.

Functionally, GTPase that plays an essential role in the late steps of ribosome biogenesis. This Rhizobium etli (strain CIAT 652) protein is GTPase Der.